Reading from the N-terminus, the 319-residue chain is ATP-dependent 6-phosphofructokinase (319 aa).

Gly-11 is a binding site for ATP. 21–25 contacts ADP; it reads RAVVR. Residues 72–73 and 102–105 contribute to the ATP site; these read RC and GDGS. Asp-103 contributes to the Mg(2+) binding site. 125-127 provides a ligand contact to substrate; it reads TID. Asp-127 functions as the Proton acceptor in the catalytic mechanism. Arg-154 is an ADP binding site. Residues Arg-162 and 169-171 contribute to the substrate site; that span reads MGR. ADP is bound by residues 185–187, Arg-211, and 213–215; these read GAE and KKH. Substrate is bound by residues Glu-222, Arg-243, and 249–252; that span reads HVQR.

The protein belongs to the phosphofructokinase type A (PFKA) family. ATP-dependent PFK group I subfamily. Prokaryotic clade 'B1' sub-subfamily. Homotetramer. It depends on Mg(2+) as a cofactor.

The protein resides in the cytoplasm. The enzyme catalyses beta-D-fructose 6-phosphate + ATP = beta-D-fructose 1,6-bisphosphate + ADP + H(+). It participates in carbohydrate degradation; glycolysis; D-glyceraldehyde 3-phosphate and glycerone phosphate from D-glucose: step 3/4. Its activity is regulated as follows. Allosterically activated by ADP and other diphosphonucleosides, and allosterically inhibited by phosphoenolpyruvate. Its function is as follows. Catalyzes the phosphorylation of D-fructose 6-phosphate to fructose 1,6-bisphosphate by ATP, the first committing step of glycolysis. The sequence is that of ATP-dependent 6-phosphofructokinase from Bacillus cereus (strain ATCC 14579 / DSM 31 / CCUG 7414 / JCM 2152 / NBRC 15305 / NCIMB 9373 / NCTC 2599 / NRRL B-3711).